The following is a 403-amino-acid chain: Putative queuine tRNA-ribosyltransferase (403 aa).

The active-site Proton acceptor is D91. Substrate contacts are provided by residues 91 to 95 (DSGGF), D177, Q218, and G245. The segment at 275 to 281 (GIGAIED) is RNA binding. The active-site Nucleophile is the D294. Residues 299–303 (ARWAR) are RNA binding; important for wobble base 34 recognition. C341, C343, C346, and H372 together coordinate Zn(2+).

The protein belongs to the queuine tRNA-ribosyltransferase family. As to quaternary structure, homodimer. Within each dimer, one monomer is responsible for RNA recognition and catalysis, while the other monomer binds to the replacement base PreQ1. It depends on Zn(2+) as a cofactor.

It carries out the reaction 7-aminomethyl-7-carbaguanine + guanosine(34) in tRNA = 7-aminomethyl-7-carbaguanosine(34) in tRNA + guanine. In terms of biological role, catalyzes the base-exchange of a guanine (G) residue with the queuine precursor 7-aminomethyl-7-deazaguanine (PreQ1) at position 34 (anticodon wobble position) in tRNAs with GU(N) anticodons (tRNA-Asp, -Asn, -His and -Tyr). Catalysis occurs through a double-displacement mechanism. The nucleophile active site attacks the C1' of nucleotide 34 to detach the guanine base from the RNA, forming a covalent enzyme-RNA intermediate. The proton acceptor active site deprotonates the incoming PreQ1, allowing a nucleophilic attack on the C1' of the ribose to form the product. After dissociation, two additional enzymatic reactions on the tRNA convert PreQ1 to queuine (Q), resulting in the hypermodified nucleoside queuosine (7-(((4,5-cis-dihydroxy-2-cyclopenten-1-yl)amino)methyl)-7-deazaguanosine). The protein is Putative queuine tRNA-ribosyltransferase of Archaeoglobus fulgidus (strain ATCC 49558 / DSM 4304 / JCM 9628 / NBRC 100126 / VC-16).